Reading from the N-terminus, the 413-residue chain is Hemolin (413 aa).

Positions 1-18 (MASKSLVVLSACIIIGSA) are cleaved as a signal peptide. Ig-like C2-type domains are found at residues 25–112 (PVLK…RVIS), 122–211 (PAKT…GEVR), 233–322 (PQYL…LKVT), and 327–413 (PKYV…VQVN). 4 cysteine pairs are disulfide-bonded: Cys-46–Cys-97, Cys-140–Cys-199, Cys-252–Cys-305, and Cys-349–Cys-395. Asn-283 carries N-linked (GlcNAc...) asparagine glycosylation.

The protein belongs to the hemolin family. Expressed in larval bristles.

The protein localises to the secreted. With respect to regulation, increased activity in presence of phospholipids (low concentrations) and calcium ions. Inhibited by PMSF. Not affected by EDTA and E-64. Functionally, bristle toxin involved in caterpillar defense by participating in hemorrhagic syndrome characterized by a consumptive coagulopathy. Exhibits procoagulant activity through selective factor X proteolytic activation. Activates factor X in a dose- and time-dependent manner but does not activate gamma-carboxyglutamic acid domainless factor X. Its activity does not depend on calcium ions. Also functions as a growth stimulator and an inhibitor of cellular death for endothelial cells. In vitro, increases proliferation of human umbilical vein endothelial cells (HUVEC) and inhibits the apoptosis induced by starvation. Also increases slightly the complement decay-accelerating factor (CD55), which protects cells from complement-mediated lysis. On the other hand, does not alter the release or expression of von Willebrand factor (VWF), tissue factor (F3), intercellular adhesion molecule-1 (ICAM1), interleukin-8 (CXCL8), and prostacyclin. Does not show fibrinolytic or fibrinogenolytic activities. The chain is Hemolin from Lonomia obliqua (Moth).